The primary structure comprises 76 residues: Parvalbumin beta 3 (76 aa).

An N-acetylalanine modification is found at A1. Residues 31 to 66 (KSPEEVKKFFAIIDQDHSGFIEEEELKLFLQTFSAG) enclose the EF-hand domain. The Ca(2+) site is built by D44, D46, S48, F50, E52, and E55.

This sequence belongs to the parvalbumin family.

Functionally, in muscle, parvalbumin is thought to be involved in relaxation after contraction. It binds two calcium ions. The chain is Parvalbumin beta 3 from Merluccius polylepis (Southern hake).